The primary structure comprises 160 residues: SsrA-binding protein (160 aa).

Belongs to the SmpB family.

The protein resides in the cytoplasm. Functionally, required for rescue of stalled ribosomes mediated by trans-translation. Binds to transfer-messenger RNA (tmRNA), required for stable association of tmRNA with ribosomes. tmRNA and SmpB together mimic tRNA shape, replacing the anticodon stem-loop with SmpB. tmRNA is encoded by the ssrA gene; the 2 termini fold to resemble tRNA(Ala) and it encodes a 'tag peptide', a short internal open reading frame. During trans-translation Ala-aminoacylated tmRNA acts like a tRNA, entering the A-site of stalled ribosomes, displacing the stalled mRNA. The ribosome then switches to translate the ORF on the tmRNA; the nascent peptide is terminated with the 'tag peptide' encoded by the tmRNA and targeted for degradation. The ribosome is freed to recommence translation, which seems to be the essential function of trans-translation. This Proteus mirabilis (strain HI4320) protein is SsrA-binding protein.